Reading from the N-terminus, the 39-residue chain is Cecropin-D-like peptide (39 aa).

In terms of tissue distribution, hemolymph.

Its subcellular location is the secreted. In terms of biological role, cecropins have lytic and antibacterial activity against several Gram-positive and Gram-negative bacteria. Has antibacterial activity against the Gram-positive bacteria M.luteus (MIC=34.4 uM), L.monocytogenes (MIC=34.4 uM), and S.lutea (MIC=34.4 uM), and the Gram-negative bacterium E.coli D31 (MIC=8.6 uM). Lacks antibacterial activity against the Gram-positive bacterium B.circulans, and the Gram-negative bacteria E.coli ATCC 25922 and S.typhimurium. Has antifungal activity against A.niger, but lacks antifungal activity against C.albicans, C.wickerhamii, F.oxysporum, P.pastoris, P.tannophilus, S.cerevisiae, T.harzianum, and Z.marxianus. This chain is Cecropin-D-like peptide, found in Galleria mellonella (Greater wax moth).